The sequence spans 221 residues: 7-cyano-7-deazaguanine synthase (221 aa).

Phenylalanine 10–leucine 20 contacts ATP. Residues cysteine 186, cysteine 195, cysteine 198, and cysteine 201 each contribute to the Zn(2+) site.

The protein belongs to the QueC family. In terms of assembly, homodimer. Zn(2+) serves as cofactor.

The enzyme catalyses 7-carboxy-7-deazaguanine + NH4(+) + ATP = 7-cyano-7-deazaguanine + ADP + phosphate + H2O + H(+). It participates in purine metabolism; 7-cyano-7-deazaguanine biosynthesis. In terms of biological role, catalyzes the ATP-dependent conversion of 7-carboxy-7-deazaguanine (CDG) to 7-cyano-7-deazaguanine (preQ(0)). The polypeptide is 7-cyano-7-deazaguanine synthase (Geobacillus kaustophilus (strain HTA426)).